Here is a 409-residue protein sequence, read N- to C-terminus: NADH-quinone oxidoreductase subunit D (409 aa).

The protein belongs to the complex I 49 kDa subunit family. In terms of assembly, NDH-1 is composed of 14 different subunits. Subunits NuoB, C, D, E, F, and G constitute the peripheral sector of the complex.

It is found in the cell inner membrane. The enzyme catalyses a quinone + NADH + 5 H(+)(in) = a quinol + NAD(+) + 4 H(+)(out). In terms of biological role, NDH-1 shuttles electrons from NADH, via FMN and iron-sulfur (Fe-S) centers, to quinones in the respiratory chain. The immediate electron acceptor for the enzyme in this species is believed to be ubiquinone. Couples the redox reaction to proton translocation (for every two electrons transferred, four hydrogen ions are translocated across the cytoplasmic membrane), and thus conserves the redox energy in a proton gradient. In Helicobacter pylori (strain G27), this protein is NADH-quinone oxidoreductase subunit D.